A 507-amino-acid chain; its full sequence is UDP-N-acetylhexosamine pyrophosphorylase-like protein 1 (507 aa).

Residues 56–91 form a disordered region; the sequence is ACARPHGPPPDLAARLRPLPPERVGRASRSDPETRR. Positions 78–91 are enriched in basic and acidic residues; it reads RVGRASRSDPETRR. The Substrate binding signature appears at 111 to 114; sequence LAGG. UTP-binding positions include 111–114, Lys125, Gln199, and Gly225; that span reads LAGG. Asn226 is a binding site for substrate. A UTP-binding site is contributed by Asp256. The short motif at 306 to 307 is the Substrate binding element; it reads EY. Lys380 provides a ligand contact to UTP. Lys410 contributes to the substrate binding site.

The protein belongs to the UDPGP type 1 family.

The polypeptide is UDP-N-acetylhexosamine pyrophosphorylase-like protein 1 (UAP1L1) (Homo sapiens (Human)).